We begin with the raw amino-acid sequence, 547 residues long: Cytochrome P450 monooxygenase fsoD (547 aa).

A helical membrane pass occupies residues Asp-3–Leu-23. Cys-490 provides a ligand contact to heme.

This sequence belongs to the cytochrome P450 family. Requires heme as cofactor.

The protein resides in the membrane. The catalysed reaction is isomotiol + reduced [NADPH--hemoprotein reductase] + O2 = 2alpha-hydroxyisomotiol + oxidized [NADPH--hemoprotein reductase] + H2O + H(+). It participates in secondary metabolite biosynthesis; terpenoid biosynthesis. Its function is as follows. Cytochrome P450 monooxygenase; part of the gene cluster that mediates the biosynthesis of the enfumafungin-type antibiotic, fuscoatroside. Within the pathway, fsoD catalyzes the hydroxylation at position C2 of isomotiol to produce 2-alpha-hydroxy-isomotiol. FsoD may also hydroxylate the intermediates 3-O-(beta-D-glucopyranosyl)-isomotiol and 2-deacetoxy-fuscoatroside at the same position C2. The fuscoatroside biosynthesis is initiated by the cyclization of 2,3(S)-oxidosqualene through FsoA's terpene cyclase (TC) domain, leading to the formation of the fernane skeleton isomotiol, harboring a fernane triterpene skeleton with a C8-C9 double bond. Subsequently, C2-alpha-hydroxylation mediated by fsoD results in the production of 2-alpha-hydroxy-isomotiol, which is further acetylated by fsoF. The glycosyltransferase (GT) domain of FsoA may convert isomotiol, 2-alpha-hydroxy-isomotiol, and the acetylated derivative of 2-alpha-hydroxy-isomotiol into their corresponding glycosides 3-O-(beta-D-glucopyranosyl)-isomotiol, 3-O-(beta-D-glucopyranosyl)-2-alpha-hydroxy-isomotiol, and 3-O-(beta-D-glucopyranosyl)-2-alpha-acetoxy-isomotiol, which then undergo oxidative cleavage under the action of fsoE to form s 2-deacetoxy-fuscoatroside, 2-deacetyl-fuscoatroside, and fuscoatroside, respectively. Although hydroxylation followed by acetylation of 3-O-(beta-D-glucopyranosyl)-isomotiol and 2-deacetoxy-fuscoatroside by fsoD and fsoF could not be ruled out, this process is likely to occur with difficulty due to bulky steric hindrance caused by the presence of a glycan at C3 in these compounds. Interestingly, fsoE can also utilize the aglycones isomotiol and 2-alpha-hydroxy-isomotiol as substrates to generate 19-beta-hydroxy-isomotiol and 2-alpha,19-beta-dihydroxy-isomotiol, respectively. These reactions occur with lower efficiency. Finally, fsoE can further convert 2-alpha,19-beta-dihydroxy-isomotiol into 2-alpha-hydroxy-ismotiol-19-one and 2-alpha-hydroxy-ismotiol-19-one into 2-deacetyl-3-deglucopyranosyl-fuscoatroside. The polypeptide is Cytochrome P450 monooxygenase fsoD (Humicola fuscoatra).